Reading from the N-terminus, the 666-residue chain is Spartin (666 aa).

N-acetylmethionine is present on Met-1. One can recognise an MIT domain in the interval 16 to 94 (IREAYKKAFL…LQNVRTRLEI (79 aa)). The segment at 124–156 (EKLPEPQSFSSAPQHAEVNGNTSTPSAGAVAAP) is disordered. Residues 146–156 (STPSAGAVAAP) are compositionally biased toward low complexity. A ubiquitin-binding region (UBR) domain region spans residues 190 to 380 (DSGEFSSVGE…QLDQGNKDVR (191 aa)). An LC3-interacting region (LIR); mediates interaction with MAP1LC3A AND MAP1LC3C motif is present at residues 193–200 (EFSSVGEE). The interval 344–398 (EENEFQIPGRTRPSSDQLKEASGTDVKQLDQGNKDVRHKGKRGKRAKDTSSEEVN) is disordered. Lys-362 is covalently cross-linked (Glycyl lysine isopeptide (Lys-Gly) (interchain with G-Cter in ubiquitin)). A compositionally biased stretch (basic residues) spans 379–388 (VRHKGKRGKR). A Senescence domain is found at 427-611 (ILSGASWVSW…YNINNIGIKA (185 aa)). Residues 431–503 (ASWVSWGLVK…LVDGVCTVAN (73 aa)) form a required for localization to lipid droplets region. A Phosphoserine modification is found at Ser-470. The interval 636 to 666 (RENQEGAANVNVRGEKDEQTKEVKEAKKKDK) is disordered. Over residues 648-666 (RGEKDEQTKEVKEAKKKDK) the composition is skewed to basic and acidic residues.

Interacts with ITCH and WWP1. Interacts (via MIT domain) with IST1; leading to the recruitment of SPART to midbodies. Interacts with MAP1LC3A and MAP1LC3C. Post-translationally, ubiquitinated; ubiquitination does not require ITCH and WWP1. In terms of tissue distribution, ubiquitously expressed, with highest levels of expression detected in adipose tissue.

It is found in the cytoplasm. It localises to the midbody. Its subcellular location is the lipid droplet. Functionally, lipophagy receptor that plays an important role in lipid droplet (LD) turnover in motor neurons. Localizes to LDs and interacts with components of the autophagy machinery, such as MAP1LC3A/C proteins to deliver LDs to autophagosomes for degradation via lipophagy. Lipid transfer protein required for lipid droplet degradation, including by lipophagy. Can bind and transfer all lipid species found in lipid droplets, from phospholipids to triglycerides and sterol esters but the direction of lipid transfer by spartin and its cargos are unknown. May be implicated in endosomal trafficking, or microtubule dynamics, or both. Participates in cytokinesis. The sequence is that of Spartin from Homo sapiens (Human).